The primary structure comprises 289 residues: MEIGLREWLIVIGIIVIAGILFDGWRRMRGSKGKLKFRLDRSFSNLPDEEETTSAEVLGPPRVLDTHKEPQLDEHDLPSMSASPREGKRSNSDKRGNSDKKRKDEPQQGDLNLDLDGPSLFTGRDDDFPDDKPAQRITEDKDLPPVEEVLVISVISRSEGGFKGPALLQNILESGLRFGEMDIFHRHESMAGNGEVLFSMANAVKPGVFDLDDIDHFSTRAVSFFLGLPGPRHPKQAFDVMVAAARKLAHELDGELKDDQRSVMTAQTIEHYRQRIVEFERRALTQRRG.

A topological domain (periplasmic) is located at residue methionine 1. A helical transmembrane segment spans residues 2–22; sequence EIGLREWLIVIGIIVIAGILF. At 23–289 the chain is on the cytoplasmic side; the sequence is DGWRRMRGSK…ERRALTQRRG (267 aa). The tract at residues 48–141 is disordered; sequence DEEETTSAEV…KPAQRITEDK (94 aa). Composition is skewed to basic and acidic residues over residues 64–77, 85–106, and 123–141; these read LDTHKEPQLDEHDL, REGKRSNSDKRGNSDKKRKDEP, and GRDDDFPDDKPAQRITEDK.

Belongs to the ZipA family. As to quaternary structure, interacts with FtsZ via their C-terminal domains.

It is found in the cell inner membrane. Its function is as follows. Essential cell division protein that stabilizes the FtsZ protofilaments by cross-linking them and that serves as a cytoplasmic membrane anchor for the Z ring. Also required for the recruitment to the septal ring of downstream cell division proteins. The polypeptide is Cell division protein ZipA (Pseudomonas savastanoi pv. phaseolicola (strain 1448A / Race 6) (Pseudomonas syringae pv. phaseolicola (strain 1448A / Race 6))).